The sequence spans 347 residues: S-adenosylmethionine:tRNA ribosyltransferase-isomerase (347 aa).

It belongs to the QueA family. As to quaternary structure, monomer.

The protein resides in the cytoplasm. The catalysed reaction is 7-aminomethyl-7-carbaguanosine(34) in tRNA + S-adenosyl-L-methionine = epoxyqueuosine(34) in tRNA + adenine + L-methionine + 2 H(+). Its pathway is tRNA modification; tRNA-queuosine biosynthesis. Its function is as follows. Transfers and isomerizes the ribose moiety from AdoMet to the 7-aminomethyl group of 7-deazaguanine (preQ1-tRNA) to give epoxyqueuosine (oQ-tRNA). The sequence is that of S-adenosylmethionine:tRNA ribosyltransferase-isomerase from Pseudomonas aeruginosa (strain ATCC 15692 / DSM 22644 / CIP 104116 / JCM 14847 / LMG 12228 / 1C / PRS 101 / PAO1).